The chain runs to 281 residues: MSSYDNHQALAGLTLGKSTDYRDTYDASLLQGVPRSLNRDPLGLHADNLPFHGADIWTLYELSWLNGKGLPQVAVGHVELPDTSLNLVESKSFKLYLNSFNQTRFASWQDVAETLTRDLSACAQGKVKVSLYRLDELEGQPIARLHGTCIDDQDIEIDNYQFSADYLQGAASGKIVEETLVSHLLKSNCLITHQPDWGSVQIQYRGAKIDREQLLRYLVSFRHHNEFHEQCVERIFNDILRFCQPESLSVYARYTRRGGLDINPWRSNGDFSPATGRLARQ.

Position 88–90 (88–90 (VES)) interacts with substrate. An NADPH-binding site is contributed by 90-91 (SK). Cysteine 189 serves as the catalytic Thioimide intermediate. Residue aspartate 196 is the Proton donor of the active site. 228–229 (HE) is a binding site for substrate. 257-258 (RG) is an NADPH binding site.

It belongs to the GTP cyclohydrolase I family. QueF type 2 subfamily. As to quaternary structure, homodimer.

The protein resides in the cytoplasm. It carries out the reaction 7-aminomethyl-7-carbaguanine + 2 NADP(+) = 7-cyano-7-deazaguanine + 2 NADPH + 3 H(+). Its pathway is tRNA modification; tRNA-queuosine biosynthesis. Functionally, catalyzes the NADPH-dependent reduction of 7-cyano-7-deazaguanine (preQ0) to 7-aminomethyl-7-deazaguanine (preQ1). This chain is NADPH-dependent 7-cyano-7-deazaguanine reductase, found in Klebsiella pneumoniae subsp. pneumoniae (strain ATCC 700721 / MGH 78578).